Here is a 179-residue protein sequence, read N- to C-terminus: MEVLRRYVLVFTSLCMTLFAWGENLQSIEADFEQIAVNEDGVPTRYEGHIIGKMPSKVKWDYKAPLQKEIYMNKNEVIMYEPRLEQVSHSRLKDKADFLSILKSAKKHNDGTYHTKVDGIEYVLFIDKAQKPERIEFVDSMGVKTTLKLKNVKLNGAISDKKFVFVPPQGVEIVELHSR.

The first 22 residues, 1-22, serve as a signal peptide directing secretion; that stretch reads MEVLRRYVLVFTSLCMTLFAWG.

The protein belongs to the LolA family. Monomer.

The protein resides in the periplasm. Its function is as follows. Participates in the translocation of lipoproteins from the inner membrane to the outer membrane. Only forms a complex with a lipoprotein if the residue after the N-terminal Cys is not an aspartate (The Asp acts as a targeting signal to indicate that the lipoprotein should stay in the inner membrane). This is Outer-membrane lipoprotein carrier protein from Helicobacter hepaticus (strain ATCC 51449 / 3B1).